Consider the following 191-residue polypeptide: Holliday junction branch migration complex subunit RuvA (191 aa).

The segment at 1-63 is domain I; sequence MIRYLRGLVL…EEGLSLYGFP (63 aa). Residues 64 to 136 form a domain II region; sequence DEENLALFEL…LKGKVPPHLL (73 aa). The segment at 136-140 is flexible linker; that stretch reads LAGEK. The domain III stretch occupies residues 141-191; that stretch reads VESEAAEEAVMALAALGFKEAQARAVVLDLLAQNPKARAQDLIKEALKRLR.

The protein belongs to the RuvA family. Homotetramer. Forms an RuvA(8)-RuvB(12)-Holliday junction (HJ) complex. HJ DNA is sandwiched between 2 RuvA tetramers; dsDNA enters through RuvA and exits via RuvB. An RuvB hexamer assembles on each DNA strand where it exits the tetramer. Each RuvB hexamer is contacted by two RuvA subunits (via domain III) on 2 adjacent RuvB subunits; this complex drives branch migration. In the full resolvosome a probable DNA-RuvA(4)-RuvB(12)-RuvC(2) complex forms which resolves the HJ.

The protein resides in the cytoplasm. Functionally, the RuvA-RuvB-RuvC complex processes Holliday junction (HJ) DNA during genetic recombination and DNA repair, while the RuvA-RuvB complex plays an important role in the rescue of blocked DNA replication forks via replication fork reversal (RFR). RuvA specifically binds to HJ cruciform DNA, conferring on it an open structure. The RuvB hexamer acts as an ATP-dependent pump, pulling dsDNA into and through the RuvAB complex. HJ branch migration allows RuvC to scan DNA until it finds its consensus sequence, where it cleaves and resolves the cruciform DNA. The chain is Holliday junction branch migration complex subunit RuvA from Thermus thermophilus (strain ATCC BAA-163 / DSM 7039 / HB27).